A 955-amino-acid chain; its full sequence is Anoctamin-4 (955 aa).

The Cytoplasmic segment spans residues 1–352 (MEASSSGITN…FGEKIGLYFA (352 aa)). A disordered region spans residues 73–97 (KDDDSLLHPGNLTSTSEDTSRLEAG). A helical transmembrane segment spans residues 353-373 (WLGWYTGMLFPAAFIGLFVFL). At 374–424 (YGVTTLDHCQVSKEVCQATDIIMCPVCDKYCPFMRLSDSCVYAKVTHLFDN) the chain is on the extracellular side. A helical transmembrane segment spans residues 425-445 (GATVFFAVFMAVWATVFLEFW). The Cytoplasmic portion of the chain corresponds to 446–505 (KRRRAVIAYDWDLIDWEEEEEEIRPQFEAKYSKKERMNPISGKPEPYQAFTDKCSRLIVS). Residues 506 to 526 (ASGIFFMICVVIAAVFGIVIY) traverse the membrane as a helical segment. The Extracellular portion of the chain corresponds to 527–547 (RVVTVSTFAAFKWALIRNNSQ). The N-linked (GlcNAc...) asparagine glycan is linked to Asn-544. Residues 548–568 (VATTGTAVCINFCIIMLLNVL) traverse the membrane as a helical segment. The Cytoplasmic segment spans residues 569 to 595 (YEKVALLLTNLEQPRTESEWENSFTLK). Residues 596 to 616 (MFLFQFVNLNSSTFYIAFFLG) form a helical membrane-spanning segment. The Extracellular portion of the chain corresponds to 617-715 (RFTGHPGAYL…AYGLFDEYLE (99 aa)). A helical transmembrane segment spans residues 716–736 (MILQFGFTTIFVAAFPLAPLL). The Cytoplasmic segment spans residues 737-768 (ALLNNIIEIRLDAYKFVTQWRRPLASRAKDIG). Residues 769–789 (IWYGILEGIGILSVITNAFVI) form a helical membrane-spanning segment. Residues 790 to 885 (AITSDFIPRL…QFWHVLAARL (96 aa)) are Extracellular-facing. Asn-824 and Asn-837 each carry an N-linked (GlcNAc...) asparagine glycan. A helical membrane pass occupies residues 886–906 (AFIIVFEHLVFCIKHLISYLI). Residues 907 to 955 (PDLPKDLRDRMRREKYLIQEMMYEAELERLQKERKERKKNGKAHHNEWP) are Cytoplasmic-facing.

Belongs to the anoctamin family. In terms of tissue distribution, predominantly expressed in neuronal tissues. Expressed at low levels in ovary, uterus, heart and brain.

The protein resides in the cell membrane. The enzyme catalyses a 1,2-diacyl-sn-glycero-3-phospho-L-serine(in) = a 1,2-diacyl-sn-glycero-3-phospho-L-serine(out). It carries out the reaction a beta-D-galactosyl-(1&lt;-&gt;1')-N-acylsphing-4-enine(out) = a beta-D-galactosyl-(1&lt;-&gt;1')-N-acylsphing-4-enine(in). It catalyses the reaction a 1,2-diacyl-sn-glycero-3-phosphocholine(in) = a 1,2-diacyl-sn-glycero-3-phosphocholine(out). Has calcium-dependent phospholipid scramblase activity; scrambles phosphatidylserine, phosphatidylcholine and galactosylceramide. Does not exhibit calcium-activated chloride channel (CaCC) activity. This chain is Anoctamin-4, found in Mus musculus (Mouse).